Here is a 214-residue protein sequence, read N- to C-terminus: MRVRYKPWAKDYLKDHPELVDMDGQHAGKMTEWFDKTQPIHIEIGSGMGQFITTLAAQNPHINYISMEREKSIVYKVLDKVKEMGLTNLKIICNDAIELNEYFKDGEVSRIYLNFSDPWPKNRHAKRRLTYHTFLALYQQILNDEGDLHFKTDNRGLFAYSLESMSQFGMYFTKINLNLHQEDDGSNILTEYEKKFSDKGSRIYRMEAKFHSQK.

S-adenosyl-L-methionine contacts are provided by Glu-43, Glu-68, Asp-95, and Asp-117. Residue Asp-117 is part of the active site. Substrate-binding positions include Lys-121, Asp-153, and 190 to 193; that span reads TEYE.

The protein belongs to the class I-like SAM-binding methyltransferase superfamily. TrmB family.

It carries out the reaction guanosine(46) in tRNA + S-adenosyl-L-methionine = N(7)-methylguanosine(46) in tRNA + S-adenosyl-L-homocysteine. Its pathway is tRNA modification; N(7)-methylguanine-tRNA biosynthesis. Its function is as follows. Catalyzes the formation of N(7)-methylguanine at position 46 (m7G46) in tRNA. This Staphylococcus aureus (strain COL) protein is tRNA (guanine-N(7)-)-methyltransferase.